Here is a 659-residue protein sequence, read N- to C-terminus: 1,4-alpha-glucan branching enzyme GlgB (659 aa).

Basic and acidic residues predominate over residues 1–12; that stretch reads MRNCKELKHEKN. The disordered stretch occupies residues 1–25; it reads MRNCKELKHEKNGNVTEKIGKNKGK. The Nucleophile role is filled by Asp-337. Catalysis depends on Glu-390, which acts as the Proton donor.

The protein belongs to the glycosyl hydrolase 13 family. GlgB subfamily. Monomer.

It catalyses the reaction Transfers a segment of a (1-&gt;4)-alpha-D-glucan chain to a primary hydroxy group in a similar glucan chain.. Its pathway is glycan biosynthesis; glycogen biosynthesis. Catalyzes the formation of the alpha-1,6-glucosidic linkages in glycogen by scission of a 1,4-alpha-linked oligosaccharide from growing alpha-1,4-glucan chains and the subsequent attachment of the oligosaccharide to the alpha-1,6 position. This chain is 1,4-alpha-glucan branching enzyme GlgB, found in Clostridium perfringens (strain ATCC 13124 / DSM 756 / JCM 1290 / NCIMB 6125 / NCTC 8237 / Type A).